The chain runs to 300 residues: GTPase Era (300 aa).

Positions 8-176 (RCGYVAIVGR…ESLIASHLPE (169 aa)) constitute an Era-type G domain. Residues 16-23 (GRPNVGKS) form a G1 region. 16–23 (GRPNVGKS) contacts GTP. Residues 42 to 46 (QTTRH) are G2. A G3 region spans residues 63–66 (DTPG). GTP contacts are provided by residues 63–67 (DTPGM) and 125–128 (NKTD). The tract at residues 125–128 (NKTD) is G4. The interval 155-157 (ISA) is G5. Residues 199-283 (VREKIMRQLG…MLNLWVKVKG (85 aa)) enclose the KH type-2 domain.

This sequence belongs to the TRAFAC class TrmE-Era-EngA-EngB-Septin-like GTPase superfamily. Era GTPase family. As to quaternary structure, monomer.

It localises to the cytoplasm. The protein resides in the cell inner membrane. Its function is as follows. An essential GTPase that binds both GDP and GTP, with rapid nucleotide exchange. Plays a role in 16S rRNA processing and 30S ribosomal subunit biogenesis and possibly also in cell cycle regulation and energy metabolism. In Pseudomonas savastanoi pv. phaseolicola (strain 1448A / Race 6) (Pseudomonas syringae pv. phaseolicola (strain 1448A / Race 6)), this protein is GTPase Era.